Reading from the N-terminus, the 181-residue chain is Peptidyl-tRNA hydrolase (181 aa).

Tyrosine 14 contacts tRNA. The Proton acceptor role is filled by histidine 19. Residues tyrosine 62, asparagine 64, and asparagine 108 each coordinate tRNA.

It belongs to the PTH family. In terms of assembly, monomer.

The protein localises to the cytoplasm. It carries out the reaction an N-acyl-L-alpha-aminoacyl-tRNA + H2O = an N-acyl-L-amino acid + a tRNA + H(+). Hydrolyzes ribosome-free peptidyl-tRNAs (with 1 or more amino acids incorporated), which drop off the ribosome during protein synthesis, or as a result of ribosome stalling. In terms of biological role, catalyzes the release of premature peptidyl moieties from peptidyl-tRNA molecules trapped in stalled 50S ribosomal subunits, and thus maintains levels of free tRNAs and 50S ribosomes. In Campylobacter jejuni subsp. jejuni serotype O:23/36 (strain 81-176), this protein is Peptidyl-tRNA hydrolase.